Here is a 196-residue protein sequence, read N- to C-terminus: Nucleoid occlusion factor SlmA (196 aa).

Residues 7–68 (TNRREEILQA…GLIEFIEEAL (62 aa)) enclose the HTH tetR-type domain. Positions 31–50 (TTAKLAKQVGVSEAALYRHF) form a DNA-binding region, H-T-H motif. Residues 110–142 (HALMFENERLRDRINQLFERIETQLRQILRERK) adopt a coiled-coil conformation.

It belongs to the nucleoid occlusion factor SlmA family. In terms of assembly, homodimer. Interacts with FtsZ.

The protein resides in the cytoplasm. The protein localises to the nucleoid. In terms of biological role, required for nucleoid occlusion (NO) phenomenon, which prevents Z-ring formation and cell division over the nucleoid. Acts as a DNA-associated cell division inhibitor that binds simultaneously chromosomal DNA and FtsZ, and disrupts the assembly of FtsZ polymers. SlmA-DNA-binding sequences (SBS) are dispersed on non-Ter regions of the chromosome, preventing FtsZ polymerization at these regions. The chain is Nucleoid occlusion factor SlmA from Vibrio campbellii (strain ATCC BAA-1116).